A 170-amino-acid polypeptide reads, in one-letter code: Small ribosomal subunit protein uS5 (170 aa).

One can recognise an S5 DRBM domain in the interval 12–75; that stretch reads LSELLVSVRR…NAAKKSMIRV (64 aa).

This sequence belongs to the universal ribosomal protein uS5 family. In terms of assembly, part of the 30S ribosomal subunit. Contacts proteins S4 and S8.

With S4 and S12 plays an important role in translational accuracy. Functionally, located at the back of the 30S subunit body where it stabilizes the conformation of the head with respect to the body. The chain is Small ribosomal subunit protein uS5 from Wolbachia pipientis wMel.